The sequence spans 39 residues: Potassium channel toxin alpha-KTx 2.16 (39 aa).

3 disulfides stabilise this stretch: C7–C29, C13–C34, and C17–C36. Position 39 is an isoleucine amide (I39).

The protein belongs to the short scorpion toxin superfamily. Potassium channel inhibitor family. Alpha-KTx 02 subfamily. In terms of tissue distribution, expressed by the venom gland.

It localises to the secreted. Blocks human voltage-gated potassium channels Kv1.2/KCNA2 (IC(50)=0.7 nM), Kv1.3/KCNA3 (IC(50)=26.2 nM) and blocks intermediate conductance calcium-activated potassium channel KCa3.1/KCNN4 (IC(50)=56 nM). This chain is Potassium channel toxin alpha-KTx 2.16, found in Centruroides tecomanus (Scorpion).